A 193-amino-acid polypeptide reads, in one-letter code: Rho-related GTP-binding protein RhoA-D (193 aa).

Residues 12-19 (GDGACGKT), 30-37 (FPEVYVPT), 59-63 (DTAGQ), 117-120 (NKKD), and 160-162 (SAK) contribute to the GTP site. A glycan ((Microbial infection) O-linked (GlcNAc) tyrosine; by Yersinia Afp18) is linked at Tyr-34. Cysteine methyl ester is present on Cys-190. Residue Cys-190 is the site of S-geranylgeranyl cysteine attachment. The propeptide at 191–193 (LLL) is removed in mature form.

It belongs to the small GTPase superfamily. Rho family. (Microbial infection) Glycosylated at Tyr-34 by Yersinia ruckeri toxin Afp18. Mono-O-GlcNAcylation by Afp18 inhibits RhoA activation by guanine nucleotide exchange factors and blocks RhoA signaling.

The protein resides in the cell membrane. Functionally, regulates a signal transduction pathway linking plasma membrane receptors to the assembly of focal adhesions and actin stress fibers. The chain is Rho-related GTP-binding protein RhoA-D from Danio rerio (Zebrafish).